Here is an 81-residue protein sequence, read N- to C-terminus: Conotoxin Cl9.6 (81 aa).

Residues 1–20 (MSTLGMTLLILLLLLPLATP) form the signal peptide. Residues 21–40 (DDVGQPPKRDTLRNLLKIGT) constitute a propeptide that is removed on maturation. Disulfide bonds link Cys46/Cys69, Cys54/Cys76, and Cys60/Cys78.

Expressed by the venom duct.

Its subcellular location is the secreted. The polypeptide is Conotoxin Cl9.6 (Californiconus californicus (California cone)).